The chain runs to 248 residues: Cobalt-precorrin-6A reductase (248 aa).

It belongs to the precorrin-6x reductase family.

It catalyses the reaction Co-precorrin-6B + NAD(+) = Co-precorrin-6A + NADH + H(+). Its pathway is cofactor biosynthesis; adenosylcobalamin biosynthesis; cob(II)yrinate a,c-diamide from sirohydrochlorin (anaerobic route): step 7/10. In terms of biological role, catalyzes the reduction of the macrocycle of cobalt-precorrin-6A to cobalt-precorrin-6B. The chain is Cobalt-precorrin-6A reductase (cbiJ) from Methanococcus maripaludis (Methanococcus deltae).